We begin with the raw amino-acid sequence, 424 residues long: 5-methylthioadenosine/S-adenosylhomocysteine deaminase (424 aa).

Positions 60 and 62 each coordinate Zn(2+). 2 residues coordinate substrate: Glu89 and His181. A Zn(2+)-binding site is contributed by His208. Positions 211 and 296 each coordinate substrate. Asp296 lines the Zn(2+) pocket.

Belongs to the metallo-dependent hydrolases superfamily. MTA/SAH deaminase family. Zn(2+) is required as a cofactor.

The enzyme catalyses S-adenosyl-L-homocysteine + H2O + H(+) = S-inosyl-L-homocysteine + NH4(+). The catalysed reaction is S-methyl-5'-thioadenosine + H2O + H(+) = S-methyl-5'-thioinosine + NH4(+). Functionally, catalyzes the deamination of 5-methylthioadenosine and S-adenosyl-L-homocysteine into 5-methylthioinosine and S-inosyl-L-homocysteine, respectively. Is also able to deaminate adenosine. This Thermococcus kodakarensis (strain ATCC BAA-918 / JCM 12380 / KOD1) (Pyrococcus kodakaraensis (strain KOD1)) protein is 5-methylthioadenosine/S-adenosylhomocysteine deaminase.